The following is a 76-amino-acid chain: Zinc finger protein 706 (76 aa).

Over residues 1 to 13 the composition is skewed to low complexity; the sequence is MARGQQKIQSQQK. Disordered stretches follow at residues 1 to 32 and 53 to 76; these read MARG…QKAA and TFKQ…DVQA. 2 stretches are compositionally biased toward basic and acidic residues: residues 17–31 and 53–62; these read KQAE…DQKA and TFKQHFESKH. The segment at 39 to 62 adopts a C2H2-type zinc-finger fold; that stretch reads YTCTVCRTQMPDPKTFKQHFESKH.

The protein resides in the cytoplasm. The protein localises to the nucleus. Transcription repressor involved in the exit of embryonic stem cells (ESCs) from self-renewal. This chain is Zinc finger protein 706, found in Gallus gallus (Chicken).